We begin with the raw amino-acid sequence, 198 residues long: Syndecan-4 (198 aa).

An N-terminal signal peptide occupies residues 1–18; sequence MAPARLFALLLLFVGGVA. Topologically, residues 19 to 145 are extracellular; the sequence is ESIRETEVID…QGSNIFERTE (127 aa). Serine 39, serine 61, and serine 63 each carry an O-linked (Xyl...) (glycosaminoglycan) serine glycan. Residue serine 95 is glycosylated (O-linked (Xyl...) (chondroitin sulfate) serine). The helical transmembrane segment at 146–170 threads the bilayer; the sequence is VLAALIVGGIVGILFAVFLILLLMY. The Cytoplasmic segment spans residues 171 to 198; it reads RMKKKDEGSYDLGKKPIYKKAPTNEFYA.

Belongs to the syndecan proteoglycan family. In terms of assembly, homodimer. Interacts with CDCP1 and SDCBP. Interacts (via its cytoplasmic domain) with GIPC (via its PDZ domain). Interacts (via its cytoplasmic domain) with NUDT16L1. Interacts with DNM2; this interaction is markedly enhanced at focal ahesion site upon induction of focal adhesions and stress-fiber formation. Shedding is enhanced by a number of factors such as heparanase, thrombin or EGF. Also by stress and wound healing. PMA-mediated shedding is inhibited by TIMP3. Post-translationally, O-glycosylated; contains both chondroitin sulfate and heparan sulfate. Ser-39, Ser-61 and Ser-63 can all be modified by either chondroitin sulfate or heparan sulfate, and the protein exists in forms that contain only chondroitin sulfate, only heparan sulfate and both chondroitin sulfate and heparan sulfate.

The protein resides in the membrane. It localises to the secreted. Its function is as follows. Cell surface proteoglycan which regulates exosome biogenesis in concert with SDCBP and PDCD6IP. The protein is Syndecan-4 of Pongo abelii (Sumatran orangutan).